Consider the following 333-residue polypeptide: tRNA N6-adenosine threonylcarbamoyltransferase (333 aa).

Fe cation contacts are provided by His-111 and His-115. Substrate-binding positions include 134–138 (LASGG), Asp-167, Gly-180, and Asn-273. Position 301 (Asp-301) interacts with Fe cation.

This sequence belongs to the KAE1 / TsaD family. The cofactor is Fe(2+).

It is found in the cytoplasm. The enzyme catalyses L-threonylcarbamoyladenylate + adenosine(37) in tRNA = N(6)-L-threonylcarbamoyladenosine(37) in tRNA + AMP + H(+). In terms of biological role, required for the formation of a threonylcarbamoyl group on adenosine at position 37 (t(6)A37) in tRNAs that read codons beginning with adenine. Is involved in the transfer of the threonylcarbamoyl moiety of threonylcarbamoyl-AMP (TC-AMP) to the N6 group of A37, together with TsaE and TsaB. TsaD likely plays a direct catalytic role in this reaction. In Desulforapulum autotrophicum (strain ATCC 43914 / DSM 3382 / VKM B-1955 / HRM2) (Desulfobacterium autotrophicum), this protein is tRNA N6-adenosine threonylcarbamoyltransferase.